The sequence spans 777 residues: Intraflagellar transport protein 80 homolog (777 aa).

WD repeat units follow at residues 12-50 (KHQELVSCVGWTTAEELYSCSDDHQIVKWNLLTSETSLI), 104-143 (AHCGAVLAGRWNYEGTALVTVGEDGQVKIWSKTGMLRSTL), 145-185 (QQGT…LQWK), 186-225 (AHDGIILKVDWNSVNDLILSAGEDCKYKVWDSYGRVLYGS), 227-265 (PHEHPITSVAWAPDGELFAVGSFHTLRLCDKTGWSYALE), 267-306 (PNTGSIFNIAWSIDGTQIAGACGNGHVVFAHVVEQRWEWK), and 504-542 (KLGTMVHTLAWCDTCNILCGIQDTRFTVWYYPNTIYVDR).

As to quaternary structure, component of the IFT complex B, at least composed of IFT20, IFT22, IFT25, IFT27, IFT46, IFT52, TRAF3IP1/IFT54, IFT57, IFT74, IFT80, IFT81, and IFT88. Interacts with IFT88. Interacts with IFT57 and IFT70B.

Its subcellular location is the cytoplasm. The protein localises to the cytoskeleton. It localises to the cilium basal body. The protein resides in the cilium axoneme. In terms of biological role, component of the intraflagellar transport (IFT) complex B, which is essential for the development and maintenance of motile and sensory cilia. In Mus musculus (Mouse), this protein is Intraflagellar transport protein 80 homolog (Ift80).